Here is a 177-residue protein sequence, read N- to C-terminus: Ribosome maturation factor RimM (177 aa).

The PRC barrel domain maps to 104–177 (GVDGIWADLI…IIKVKLMEGM (74 aa)).

This sequence belongs to the RimM family. In terms of assembly, binds ribosomal protein uS19.

The protein localises to the cytoplasm. Functionally, an accessory protein needed during the final step in the assembly of 30S ribosomal subunit, possibly for assembly of the head region. Essential for efficient processing of 16S rRNA. May be needed both before and after RbfA during the maturation of 16S rRNA. It has affinity for free ribosomal 30S subunits but not for 70S ribosomes. This chain is Ribosome maturation factor RimM, found in Magnetococcus marinus (strain ATCC BAA-1437 / JCM 17883 / MC-1).